A 986-amino-acid chain; its full sequence is Probable ATP-dependent RNA helicase ddx42 (986 aa).

Disordered stretches follow at residues 1–149 (MSKR…DEDD), 165–192 (AAIDNSKSIEKGQQQQQSLKSKRDDIDN), and 206–252 (QLAN…IEPL). The span at 29–82 (SNINNNNNSNNNNNNNNNNNNNNNNNNNKNNIGTGINLNIKNNNNINNNNNKSG) shows a compositional bias: low complexity. Polar residues predominate over residues 105-117 (PPKSSMTTLNKSP). The span at 119 to 137 (NFENASSNNNNNNNNNNQE) shows a compositional bias: low complexity. Positions 217–236 (DDDVDYSSLDDDDGYFDDEE) are enriched in acidic residues. The Q motif signature appears at 305-333 (TSFGHYGFDDILLQAIAKQSIETPTPIQK). The region spanning 336-511 (IPIALSGRDL…RTILSDPIKI (176 aa)) is the Helicase ATP-binding domain. 349-356 (AKTGSGKT) contacts ATP. A DEAD box motif is present at residues 459–462 (DEAD). A Helicase C-terminal domain is found at 522–684 (DITQIVQVLK…FVPPELIDVA (163 aa)). Residues 688–986 (PHFKRERGGG…FNQRSQYNRR (299 aa)) form a disordered region. A compositionally biased stretch (gly residues) spans 696 to 723 (GGGGGSNRGRGRGGGGVGYRRNSRGGGV). Composition is skewed to low complexity over residues 753-764 (NPNNTDNSEINN) and 771-978 (NNEN…NNFN).

The protein belongs to the DEAD box helicase family. DDX42 subfamily.

Its subcellular location is the nucleus. It catalyses the reaction ATP + H2O = ADP + phosphate + H(+). Functionally, probable ATP-dependent RNA helicase which may bind to partially double-stranded RNAs (dsRNAs) in order to unwind RNA secondary structures. In Dictyostelium discoideum (Social amoeba), this protein is Probable ATP-dependent RNA helicase ddx42 (ddx42).